Consider the following 100-residue polypeptide: Small ribosomal subunit protein uS14c (100 aa).

It belongs to the universal ribosomal protein uS14 family. Part of the 30S ribosomal subunit.

It localises to the plastid. Functionally, binds 16S rRNA, required for the assembly of 30S particles. This is Small ribosomal subunit protein uS14c from Euglena longa (Euglenophycean alga).